The following is a 332-amino-acid chain: Glycerol-3-phosphate dehydrogenase [NAD(P)+] (332 aa).

Tryptophan 11, arginine 30, and lysine 108 together coordinate NADPH. Positions 108, 137, and 139 each coordinate sn-glycerol 3-phosphate. Alanine 141 provides a ligand contact to NADPH. Sn-glycerol 3-phosphate contacts are provided by lysine 192, aspartate 245, serine 255, arginine 256, and asparagine 257. Lysine 192 acts as the Proton acceptor in catalysis. Position 256 (arginine 256) interacts with NADPH. NADPH is bound by residues valine 280 and glutamate 282.

This sequence belongs to the NAD-dependent glycerol-3-phosphate dehydrogenase family.

It localises to the cytoplasm. The catalysed reaction is sn-glycerol 3-phosphate + NAD(+) = dihydroxyacetone phosphate + NADH + H(+). The enzyme catalyses sn-glycerol 3-phosphate + NADP(+) = dihydroxyacetone phosphate + NADPH + H(+). The protein operates within membrane lipid metabolism; glycerophospholipid metabolism. Functionally, catalyzes the reduction of the glycolytic intermediate dihydroxyacetone phosphate (DHAP) to sn-glycerol 3-phosphate (G3P), the key precursor for phospholipid synthesis. The protein is Glycerol-3-phosphate dehydrogenase [NAD(P)+] of Burkholderia cenocepacia (strain ATCC BAA-245 / DSM 16553 / LMG 16656 / NCTC 13227 / J2315 / CF5610) (Burkholderia cepacia (strain J2315)).